Consider the following 282-residue polypeptide: Acetylglutamate kinase (282 aa).

Substrate is bound by residues 62–63, R84, and N178; that span reads GG.

It belongs to the acetylglutamate kinase family. ArgB subfamily.

It localises to the cytoplasm. It catalyses the reaction N-acetyl-L-glutamate + ATP = N-acetyl-L-glutamyl 5-phosphate + ADP. It participates in amino-acid biosynthesis; L-arginine biosynthesis; N(2)-acetyl-L-ornithine from L-glutamate: step 2/4. Functionally, catalyzes the ATP-dependent phosphorylation of N-acetyl-L-glutamate. In Thermotoga sp. (strain RQ2), this protein is Acetylglutamate kinase.